Consider the following 131-residue polypeptide: Cuticle protein 79, isoform A (131 aa).

A run of 3 repeats spans residues 37–40 (AAPA), 45–48 (AAPA), and 53–56 (AAPA).

Component of the cuticle of migratory locust which contains more than 100 different structural proteins. The protein is Cuticle protein 79, isoform A of Locusta migratoria (Migratory locust).